The primary structure comprises 289 residues: Ribosomal RNA small subunit methyltransferase I (289 aa).

This sequence belongs to the methyltransferase superfamily. RsmI family.

Its subcellular location is the cytoplasm. It catalyses the reaction cytidine(1402) in 16S rRNA + S-adenosyl-L-methionine = 2'-O-methylcytidine(1402) in 16S rRNA + S-adenosyl-L-homocysteine + H(+). Functionally, catalyzes the 2'-O-methylation of the ribose of cytidine 1402 (C1402) in 16S rRNA. This chain is Ribosomal RNA small subunit methyltransferase I, found in Halalkalibacterium halodurans (strain ATCC BAA-125 / DSM 18197 / FERM 7344 / JCM 9153 / C-125) (Bacillus halodurans).